The following is a 102-amino-acid chain: uncharacterized protein (102 aa).

Helical transmembrane passes span 38 to 58 (FYVW…QLIL) and 64 to 84 (VLFL…LFQF).

The protein resides in the membrane. This is an uncharacterized protein from Saccharomyces cerevisiae (strain ATCC 204508 / S288c) (Baker's yeast).